We begin with the raw amino-acid sequence, 63 residues long: Large ribosomal subunit protein bL32 (63 aa).

The disordered stretch occupies residues 1 to 45 (MAVQQNKKSRSRRDMRRSHDALTKPTLSVDPTTGETHLRHHMTPD). The segment covering 7–16 (KKSRSRRDMR) has biased composition (basic residues). Over residues 25 to 35 (PTLSVDPTTGE) the composition is skewed to polar residues.

It belongs to the bacterial ribosomal protein bL32 family.

The sequence is that of Large ribosomal subunit protein bL32 from Legionella pneumophila (strain Paris).